Here is a 451-residue protein sequence, read N- to C-terminus: Threonylcarbamoyladenosine tRNA methylthiotransferase MtaB (451 aa).

The MTTase N-terminal domain maps to 2–114 (ATVAFHTLGC…MLGYIDQYRE (113 aa)). [4Fe-4S] cluster is bound by residues Cys11, Cys47, Cys78, Cys153, Cys157, and Cys160. One can recognise a Radical SAM core domain in the interval 139–369 (FTDRTRASLK…IALSDQLAKE (231 aa)). Residues 372 to 437 (SQYENEVLEI…YPYNEGQFVR (66 aa)) enclose the TRAM domain.

This sequence belongs to the methylthiotransferase family. MtaB subfamily. [4Fe-4S] cluster serves as cofactor.

Its subcellular location is the cytoplasm. The enzyme catalyses N(6)-L-threonylcarbamoyladenosine(37) in tRNA + (sulfur carrier)-SH + AH2 + 2 S-adenosyl-L-methionine = 2-methylsulfanyl-N(6)-L-threonylcarbamoyladenosine(37) in tRNA + (sulfur carrier)-H + 5'-deoxyadenosine + L-methionine + A + S-adenosyl-L-homocysteine + 2 H(+). In terms of biological role, catalyzes the methylthiolation of N6-threonylcarbamoyladenosine (t(6)A), leading to the formation of 2-methylthio-N6-threonylcarbamoyladenosine (ms(2)t(6)A) at position 37 in tRNAs that read codons beginning with adenine. The protein is Threonylcarbamoyladenosine tRNA methylthiotransferase MtaB (mtaB) of Bacillus subtilis (strain 168).